We begin with the raw amino-acid sequence, 78 residues long: DNA gyrase inhibitor YacG (78 aa).

The Zn(2+) site is built by Cys7, Cys10, Cys26, and Cys30.

It belongs to the DNA gyrase inhibitor YacG family. As to quaternary structure, interacts with GyrB. The cofactor is Zn(2+).

Its function is as follows. Inhibits all the catalytic activities of DNA gyrase by preventing its interaction with DNA. Acts by binding directly to the C-terminal domain of GyrB, which probably disrupts DNA binding by the gyrase. This Colwellia psychrerythraea (strain 34H / ATCC BAA-681) (Vibrio psychroerythus) protein is DNA gyrase inhibitor YacG.